The sequence spans 116 residues: Ribosome-binding factor A (116 aa).

This sequence belongs to the RbfA family. As to quaternary structure, monomer. Binds 30S ribosomal subunits, but not 50S ribosomal subunits or 70S ribosomes.

Its subcellular location is the cytoplasm. In terms of biological role, one of several proteins that assist in the late maturation steps of the functional core of the 30S ribosomal subunit. Associates with free 30S ribosomal subunits (but not with 30S subunits that are part of 70S ribosomes or polysomes). Required for efficient processing of 16S rRNA. May interact with the 5'-terminal helix region of 16S rRNA. The polypeptide is Ribosome-binding factor A (Staphylococcus epidermidis (strain ATCC 35984 / DSM 28319 / BCRC 17069 / CCUG 31568 / BM 3577 / RP62A)).